A 368-amino-acid chain; its full sequence is Nucleotide pyrophosphatase/phosphodiesterase (368 aa).

Belongs to the metallophosphoesterase superfamily. Monomer and homomer. Glycosylated.

The protein localises to the plastid. It localises to the chloroplast. Hydrolyzes pyrophosphate, phosphodiester and phosphosulfate linkages of nucleotide-sugars, sulfonucleotides and nucleoside di and triphosphates. Highest activity observed with the substrates ADP-glucose and adenosine 5'-phosphosulfate. The polypeptide is Nucleotide pyrophosphatase/phosphodiesterase (Hordeum vulgare (Barley)).